The chain runs to 337 residues: F420-dependent glucose-6-phosphate dehydrogenase 2 (337 aa).

Aspartate 40 serves as a coordination point for coenzyme F420-(gamma-Glu)n. The active-site Proton donor is the histidine 41. Coenzyme F420-(gamma-Glu)n contacts are provided by residues threonine 77 and 108–109; that span reads TG. The active-site Proton acceptor is the glutamate 110. Coenzyme F420-(gamma-Glu)n-binding positions include asparagine 113, 178-179, and 181-182; these read GG and VV. Residues threonine 196, lysine 199, lysine 260, and arginine 284 each contribute to the substrate site.

This sequence belongs to the F420-dependent glucose-6-phosphate dehydrogenase family. In terms of assembly, homodimer.

The catalysed reaction is oxidized coenzyme F420-(gamma-L-Glu)(n) + D-glucose 6-phosphate + H(+) = 6-phospho-D-glucono-1,5-lactone + reduced coenzyme F420-(gamma-L-Glu)(n). Catalyzes the coenzyme F420-dependent oxidation of glucose 6-phosphate (G6P) to 6-phosphogluconolactone. In Rhodococcus jostii (strain RHA1), this protein is F420-dependent glucose-6-phosphate dehydrogenase 2.